The primary structure comprises 147 residues: Mucoricin (147 aa).

A Ricin B-type lectin domain is found at glutamate 4–valine 143.

It belongs to the ribosome-inactivating protein family. Type 1 RIP subfamily.

The protein resides in the secreted. It carries out the reaction Endohydrolysis of the N-glycosidic bond at one specific adenosine on the 28S rRNA.. In terms of biological role, N-glycosylase that inhibits protein synthesis in the host by depurinating ribosomal rRNA, and thus acts as a ribosomal inactivating protein (RIP). Promotes vascular permeability in the host and induces necrosis and apoptosis of host alveolar epithelial cells. The protein is Mucoricin of Rhizopus delemar (strain RA 99-880 / ATCC MYA-4621 / FGSC 9543 / NRRL 43880) (Mucormycosis agent).